The chain runs to 716 residues: Fusoxypene synthase (716 aa).

Positions leucine 4–threonine 328 are sesterterpenoid synthase. Position 96 (aspartate 96) interacts with Mg(2+). Aspartate 96 provides a ligand contact to substrate. Residues arginine 187–asparagine 190 are substrate. Asparagine 231 is a substrate binding site. The segment at serine 235–glutamate 239 is substrate. Residues tryptophan 329 to cysteine 711 are geranylfarnesyl diphosphate synthase. Positions 422, 425, and 454 each coordinate isopentenyl diphosphate. The Mg(2+) site is built by aspartate 461 and aspartate 465. Dimethylallyl diphosphate is bound at residue arginine 470. Position 471 (arginine 471) interacts with isopentenyl diphosphate. The dimethylallyl diphosphate site is built by lysine 548, threonine 549, glutamine 587, asparagine 594, and lysine 602.

In the N-terminal section; belongs to the terpene synthase family. The protein in the C-terminal section; belongs to the FPP/GGPP synthase family.

The enzyme catalyses 4 isopentenyl diphosphate + dimethylallyl diphosphate = (2E,6E,10E,14E)-geranylfarnesyl diphosphate + 4 diphosphate. It catalyses the reaction (2E,6E,10E,14E)-geranylfarnesyl diphosphate = fusoxypene A + diphosphate. It carries out the reaction (2E,6E,10E,14E)-geranylfarnesyl diphosphate = fusoxypene B + diphosphate. The catalysed reaction is (2E,6E,10E,14E)-geranylfarnesyl diphosphate = fusoxypene C + diphosphate. The enzyme catalyses (2E,6E,10E,14E)-geranylfarnesyl diphosphate = (-)-astellatene + diphosphate. In terms of biological role, bifunctional sesterterpenoid synthase that performs both prenyl transferase and terpene cyclase activity, converting isopentenyl diphosphate and dimethylallyl diphosphate into geranylfarnesyl diphosphate (GFPP) and then converting GFPP into the enantiomeric sesterterpenes with a 5-6-7-3-5 ring system fusoxypene A, fusoxypene B, fusoxypene C and (-)-astellatene. The polypeptide is Fusoxypene synthase (Fusarium oxysporum (Fusarium vascular wilt)).